The following is a 246-amino-acid chain: 4-hydroxy-tetrahydrodipicolinate reductase (246 aa).

Residues 7-12, 84-86, and 108-111 each bind NAD(+); these read GATGRT, GTT, and ASNF. H140 serves as the catalytic Proton donor/acceptor. A (S)-2,3,4,5-tetrahydrodipicolinate-binding site is contributed by H141. The Proton donor role is filled by K144. 150 to 151 serves as a coordination point for (S)-2,3,4,5-tetrahydrodipicolinate; sequence GT.

Belongs to the DapB family.

The protein localises to the cytoplasm. It carries out the reaction (S)-2,3,4,5-tetrahydrodipicolinate + NAD(+) + H2O = (2S,4S)-4-hydroxy-2,3,4,5-tetrahydrodipicolinate + NADH + H(+). The enzyme catalyses (S)-2,3,4,5-tetrahydrodipicolinate + NADP(+) + H2O = (2S,4S)-4-hydroxy-2,3,4,5-tetrahydrodipicolinate + NADPH + H(+). It participates in amino-acid biosynthesis; L-lysine biosynthesis via DAP pathway; (S)-tetrahydrodipicolinate from L-aspartate: step 4/4. Functionally, catalyzes the conversion of 4-hydroxy-tetrahydrodipicolinate (HTPA) to tetrahydrodipicolinate. This Natronomonas pharaonis (strain ATCC 35678 / DSM 2160 / CIP 103997 / JCM 8858 / NBRC 14720 / NCIMB 2260 / Gabara) (Halobacterium pharaonis) protein is 4-hydroxy-tetrahydrodipicolinate reductase.